The chain runs to 357 residues: Phosphoribosylformylglycinamidine cyclo-ligase (357 aa).

It belongs to the AIR synthase family.

The protein resides in the cytoplasm. The enzyme catalyses 2-formamido-N(1)-(5-O-phospho-beta-D-ribosyl)acetamidine + ATP = 5-amino-1-(5-phospho-beta-D-ribosyl)imidazole + ADP + phosphate + H(+). It functions in the pathway purine metabolism; IMP biosynthesis via de novo pathway; 5-amino-1-(5-phospho-D-ribosyl)imidazole from N(2)-formyl-N(1)-(5-phospho-D-ribosyl)glycinamide: step 2/2. The polypeptide is Phosphoribosylformylglycinamidine cyclo-ligase (Rhizobium etli (strain CIAT 652)).